Here is a 513-residue protein sequence, read N- to C-terminus: ATP synthase subunit alpha (513 aa).

169–176 (GDRQTGKT) provides a ligand contact to ATP.

The protein belongs to the ATPase alpha/beta chains family. As to quaternary structure, F-type ATPases have 2 components, CF(1) - the catalytic core - and CF(0) - the membrane proton channel. CF(1) has five subunits: alpha(3), beta(3), gamma(1), delta(1), epsilon(1). CF(0) has three main subunits: a(1), b(2) and c(9-12). The alpha and beta chains form an alternating ring which encloses part of the gamma chain. CF(1) is attached to CF(0) by a central stalk formed by the gamma and epsilon chains, while a peripheral stalk is formed by the delta and b chains.

The protein resides in the cell inner membrane. It catalyses the reaction ATP + H2O + 4 H(+)(in) = ADP + phosphate + 5 H(+)(out). Produces ATP from ADP in the presence of a proton gradient across the membrane. The alpha chain is a regulatory subunit. The sequence is that of ATP synthase subunit alpha from Shigella boydii serotype 18 (strain CDC 3083-94 / BS512).